We begin with the raw amino-acid sequence, 205 residues long: Small ribosomal subunit protein uS4 (205 aa).

Basic and acidic residues predominate over residues 1–16 (MSKRETTKYKIDRRMG). Residues 1–46 (MSKRETTKYKIDRRMGENIWGRPKSPVNRRDYGPGQHGQRRKGKLS) form a disordered region. One can recognise an S4 RNA-binding domain in the interval 94 to 157 (SRLDAVIYRA…KQLVLVLESV (64 aa)).

Belongs to the universal ribosomal protein uS4 family. As to quaternary structure, part of the 30S ribosomal subunit. Contacts protein S5. The interaction surface between S4 and S5 is involved in control of translational fidelity.

In terms of biological role, one of the primary rRNA binding proteins, it binds directly to 16S rRNA where it nucleates assembly of the body of the 30S subunit. With S5 and S12 plays an important role in translational accuracy. This is Small ribosomal subunit protein uS4 from Bartonella quintana (strain Toulouse) (Rochalimaea quintana).